A 257-amino-acid polypeptide reads, in one-letter code: Phycoerythrobilin:ferredoxin oxidoreductase (257 aa).

The protein belongs to the HY2 family.

It catalyses the reaction (3Z)-phycoerythrobilin + oxidized 2[4Fe-4S]-[ferredoxin] = 15,16-dihydrobiliverdin + reduced 2[4Fe-4S]-[ferredoxin] + 2 H(+). In terms of biological role, catalyzes the two-electron reduction of the C2 and C3(1) diene system of 15,16-dihydrobiliverdin. The sequence is that of Phycoerythrobilin:ferredoxin oxidoreductase from Synechococcus sp. (strain CC9311).